A 707-amino-acid chain; its full sequence is Metal transporter CNNM3 (707 aa).

The helical transmembrane segment at 11 to 27 (LGWLFAALCLGNAAGEA) threads the bilayer. N-linked (GlcNAc...) asparagine glycosylation occurs at Asn73. The CNNM transmembrane domain occupies 130–308 (EAAPPWALGL…DPYSDLSKGV (179 aa)). A run of 3 helical transmembrane segments spans residues 193-213 (CALG…AVLL), 221-241 (AVPA…VVPA), and 261-281 (LAVL…ELAA). 2 consecutive CBS domains span residues 318–379 (LTPL…CTPL) and 386–452 (YNHP…ILDE). Ser661 is subject to Phosphoserine. Residues 678–691 (LGEKTTTAAGSSHS) show a composition bias toward polar residues. The disordered stretch occupies residues 678–707 (LGEKTTTAAGSSHSRPGVPVEGSPGRNPGV). The residue at position 700 (Ser700) is a Phosphoserine.

Belongs to the ACDP family. As to expression, widely expressed. Expressed at higher level in heart and spleen.

It localises to the cell membrane. In terms of biological role, probable metal transporter. This Homo sapiens (Human) protein is Metal transporter CNNM3 (CNNM3).